A 1758-amino-acid chain; its full sequence is uncharacterized protein (1758 aa).

Positions 1–12 (MCFFLGSRLAYA) are cleaved as a signal peptide. Residues 1465-1758 (ENLYNNGMWI…SFILGGNYYF (294 aa)) form the Autotransporter domain.

It localises to the cell outer membrane. This is an uncharacterized protein from Escherichia coli (strain K12).